The chain runs to 631 residues: Pescadillo homolog (631 aa).

Positions 321–414 constitute a BRCT domain; it reads RLRNLFKGLK…QLLPTNKYFL (94 aa). 2 disordered regions span residues 450–469 and 489–569; these read HAQS…EDDT and EYKK…MVKP. 2 positions are modified to phosphoserine: S453 and S457. 2 stretches are compositionally biased toward acidic residues: residues 454–469 and 499–524; these read DDES…EDDT and VNED…EELD. A coiled-coil region spans residues 510–541; that stretch reads FDGEQESDEEEEELDEKTKRLQEEKKKMSVQS. Basic and acidic residues predominate over residues 525 to 536; that stretch reads EKTKRLQEEKKK. The segment covering 543 to 552 has biased composition (basic residues); sequence KVHKVNKRQL. Residues 553 to 562 are compositionally biased toward basic and acidic residues; sequence HKAEVDEHRL.

This sequence belongs to the pescadillo family.

The protein localises to the nucleus. Its subcellular location is the nucleolus. It is found in the nucleoplasm. Its function is as follows. Required for maturation of ribosomal RNAs and formation of the large ribosomal subunit. The sequence is that of Pescadillo homolog from Drosophila mojavensis (Fruit fly).